A 291-amino-acid chain; its full sequence is ATP synthase gamma chain (291 aa).

This sequence belongs to the ATPase gamma chain family. As to quaternary structure, F-type ATPases have 2 components, CF(1) - the catalytic core - and CF(0) - the membrane proton channel. CF(1) has five subunits: alpha(3), beta(3), gamma(1), delta(1), epsilon(1). CF(0) has three main subunits: a, b and c.

The protein localises to the cell inner membrane. Functionally, produces ATP from ADP in the presence of a proton gradient across the membrane. The gamma chain is believed to be important in regulating ATPase activity and the flow of protons through the CF(0) complex. This Burkholderia thailandensis (strain ATCC 700388 / DSM 13276 / CCUG 48851 / CIP 106301 / E264) protein is ATP synthase gamma chain.